We begin with the raw amino-acid sequence, 596 residues long: Elongation factor 4 (596 aa).

The 182-residue stretch at 2–183 (KNIRNFSIIA…TIITKIPAPK (182 aa)) folds into the tr-type G domain. GTP contacts are provided by residues 14 to 19 (DHGKST) and 130 to 133 (NKID).

It belongs to the TRAFAC class translation factor GTPase superfamily. Classic translation factor GTPase family. LepA subfamily.

It localises to the cell inner membrane. It carries out the reaction GTP + H2O = GDP + phosphate + H(+). In terms of biological role, required for accurate and efficient protein synthesis under certain stress conditions. May act as a fidelity factor of the translation reaction, by catalyzing a one-codon backward translocation of tRNAs on improperly translocated ribosomes. Back-translocation proceeds from a post-translocation (POST) complex to a pre-translocation (PRE) complex, thus giving elongation factor G a second chance to translocate the tRNAs correctly. Binds to ribosomes in a GTP-dependent manner. The sequence is that of Elongation factor 4 from Campylobacter lari (strain RM2100 / D67 / ATCC BAA-1060).